A 435-amino-acid polypeptide reads, in one-letter code: Tol-Pal system protein TolB (435 aa).

An N-terminal signal peptide occupies residues 1-26 (MKTFSLLRILIVLVGMAGAFATPAMA).

This sequence belongs to the TolB family. The Tol-Pal system is composed of five core proteins: the inner membrane proteins TolA, TolQ and TolR, the periplasmic protein TolB and the outer membrane protein Pal. They form a network linking the inner and outer membranes and the peptidoglycan layer.

It is found in the periplasm. In terms of biological role, part of the Tol-Pal system, which plays a role in outer membrane invagination during cell division and is important for maintaining outer membrane integrity. This chain is Tol-Pal system protein TolB, found in Allorhizobium ampelinum (strain ATCC BAA-846 / DSM 112012 / S4) (Agrobacterium vitis (strain S4)).